The chain runs to 232 residues: 7-cyano-7-deazaguanine synthase (232 aa).

Residue 7–17 participates in ATP binding; it reads CSGGLDSVSLA. Zn(2+) is bound by residues Cys185, Cys193, Cys196, and Cys199.

This sequence belongs to the QueC family. The cofactor is Zn(2+).

The enzyme catalyses 7-carboxy-7-deazaguanine + NH4(+) + ATP = 7-cyano-7-deazaguanine + ADP + phosphate + H2O + H(+). It functions in the pathway purine metabolism; 7-cyano-7-deazaguanine biosynthesis. In terms of biological role, catalyzes the ATP-dependent conversion of 7-carboxy-7-deazaguanine (CDG) to 7-cyano-7-deazaguanine (preQ(0)). This chain is 7-cyano-7-deazaguanine synthase, found in Chelativorans sp. (strain BNC1).